The sequence spans 509 residues: Glycogen synthase (509 aa).

Lys47 serves as a coordination point for ADP-alpha-D-glucose.

The protein belongs to the glycosyltransferase 1 family. Bacterial/plant glycogen synthase subfamily.

The enzyme catalyses [(1-&gt;4)-alpha-D-glucosyl](n) + ADP-alpha-D-glucose = [(1-&gt;4)-alpha-D-glucosyl](n+1) + ADP + H(+). It participates in glycan biosynthesis; glycogen biosynthesis. Synthesizes alpha-1,4-glucan chains using ADP-glucose. The sequence is that of Glycogen synthase from Xanthomonas oryzae pv. oryzae (strain MAFF 311018).